The primary structure comprises 177 residues: MELEQLLNSVPEYAKDLKLNMGGVLRQTELTEQQAWGTAVACAIAARNPQLRESVLGEAAKHLNEQALFAAKAAASVMGMNNIFYRFRHLSTNPKYGAMPARLRMQVIAKHGSDPIDFELWCLAVSAMNGCGVCVDSHENVLREKGVSEEAVLAAIRIASTIHGLAAILDVEADPIA.

Cys131 functions as the Proton donor in the catalytic mechanism. A disulfide bond links Cys131 and Cys134. Cys134 acts as the Cysteine sulfenic acid (-SOH) intermediate in catalysis.

It belongs to the AhpD family.

It catalyses the reaction N(6)-[(R)-dihydrolipoyl]-L-lysyl-[lipoyl-carrier protein] + a hydroperoxide = N(6)-[(R)-lipoyl]-L-lysyl-[lipoyl-carrier protein] + an alcohol + H2O. Its function is as follows. Antioxidant protein with alkyl hydroperoxidase activity. Required for the reduction of the AhpC active site cysteine residues and for the regeneration of the AhpC enzyme activity. The chain is Alkyl hydroperoxide reductase AhpD from Solibacter usitatus (strain Ellin6076).